The chain runs to 375 residues: Platelet-derived growth factor receptor-like protein (375 aa).

The signal sequence occupies residues 1–17; it reads MKVWLLLGLLLLHEALG. The disordered stretch occupies residues 19–63; sequence VAGQHPPKNKRPKEQGENRIKPTNKKAKPKIPKIKDRDTADSAPK. Positions 40–50 are enriched in basic residues; that stretch reads PTNKKAKPKIP. The 98-residue stretch at 62 to 159 folds into the Ig-like C2-type 1 domain; that stretch reads PKSQSIMMQA…GYICRRDEAR (98 aa). Cys96 and Cys143 form a disulfide bridge. A glycan (N-linked (GlcNAc...) asparagine) is linked at Asn219. The 104-residue stretch at 272-375 folds into the Ig-like C2-type 2 domain; sequence PSTTILASSN…TTVATTVEFS (104 aa). A disulfide bond links Cys293 and Cys357.

In terms of assembly, forms a complex composed of PDGFRL, TNK2 and GRB2.

It localises to the secreted. The protein is Platelet-derived growth factor receptor-like protein (Pdgfrl) of Rattus norvegicus (Rat).